Consider the following 111-residue polypeptide: Parvalbumin alpha (111 aa).

Thr1 carries the post-translational modification N-acetylthreonine; in form C2. EF-hand domains are found at residues 40-75 (KPDDTLKEVFGILDQDKSGYIEEEELKFVLKGFAAG) and 79-111 (LTANETKALLKAGDQDGDDKIGVDEFTNLVKAA). Ca(2+) is bound by residues Asp53, Asp55, Ser57, Tyr59, Glu61, Glu64, Asp92, Asp94, Asp96, Lys98, and Glu103.

This sequence belongs to the parvalbumin family. Acetylation of Thr-1 converts C1 to C2.

In terms of biological role, in muscle, parvalbumin is thought to be involved in relaxation after contraction. It binds two calcium ions. The protein is Parvalbumin alpha of Latimeria chalumnae (Coelacanth).